Consider the following 597-residue polypeptide: Probable bifunctional ADP-ribose hydrolase/ADP-ribosyltransferase (597 aa).

Positions 99 to 299 constitute a Macro domain; that stretch reads SRLIKHGDLG…FYSKLLGPSH (201 aa). ADP-D-ribose contacts are provided by aspartate 118, isoleucine 119, and asparagine 133. Zn(2+) contacts are provided by cysteine 139, histidine 144, and cysteine 146. Positions 146, 147, 148, 244, 245, 246, and 248 each coordinate ADP-D-ribose. The region spanning 307-597 is the Deacetylase sirtuin-type domain; it reads ENTPQGSLSL…IGRAIPLLLE (291 aa). NAD(+)-binding positions include alanine 333, 418–421, and glutamine 438; that span reads SNAD. Zn(2+) contacts are provided by cysteine 446, cysteine 450, cysteine 485, and cysteine 488. Valine 584 contributes to the NAD(+) binding site.

In the N-terminal section; belongs to the MacroD-type family. Zn-Macro subfamily. This sequence in the C-terminal section; belongs to the sirtuin family. Class M subfamily. In terms of assembly, monomer. Zn(2+) is required as a cofactor.

The catalysed reaction is 5-O-(ADP-D-ribosyl)-L-glutamyl-[protein] + H2O = L-glutamyl-[protein] + ADP-D-ribose + H(+). Functionally, is probably a bifunctional enzyme with ADP-ribosyltransferase and ADP-ribosylhydrolase activities. In vitro, can act as an ADP-ribosylhydrolase that hydrolyzes ADP-ribosyl-glutamate bonds. It can remove the ADP-ribosyl modification from the human mono-ADP-ribosylated PARP1 E988Q mutant, which is primarily modified on glutamate site with only minor aspartate contribution. It cannot hydrolyze the ADP-ribosyl-arpartate bond in ribosylated S.pyogenes GcvH-L. The protein is Probable bifunctional ADP-ribose hydrolase/ADP-ribosyltransferase of Fusarium oxysporum f. sp. cubense.